Reading from the N-terminus, the 476-residue chain is Rifampicin monooxygenase (476 aa).

Positions 12, 31, 32, 98, 122, and 156 each coordinate FAD. The rifampicin site is built by Arg196 and Arg213. FAD-binding residues include Asp277, Leu290, and Asn291.

It belongs to the rifampicin monooxygenase family. FAD serves as cofactor.

It carries out the reaction rifampicin + NADPH + O2 = rifampicin para-naphthoquinone carboxamide + NADP(+) + H2O + H(+). The catalysed reaction is rifampicin + NADH + O2 = rifampicin para-naphthoquinone carboxamide + NAD(+) + H2O + H(+). It catalyses the reaction rifamycin SV + NADPH + O2 = rifamycin SV para-naphthoquinone carboxamide + NADP(+) + H2O. The enzyme catalyses rifamycin SV + NADH + O2 = rifamycin SV para-naphthoquinone carboxamide + NAD(+) + H2O. In terms of biological role, monooxygenase that can modify rifampicin, thereby inactivating its antibiotic activity. Inactivates a broad range of rifamycin antibiotics. The polypeptide is Rifampicin monooxygenase (Streptomyces venezuelae (strain ATCC 10712 / CBS 650.69 / DSM 40230 / JCM 4526 / NBRC 13096 / PD 04745)).